Reading from the N-terminus, the 326-residue chain is dTDP-4-dehydro-6-deoxy-D-allose reductase (326 aa).

NADP(+)-binding positions include 15-21 (GALGFIG) and 129-132 (MSSS). Y160 (proton donor/acceptor) is an active-site residue. Residues K164 and 187-190 (PGNV) contribute to the NADP(+) site.

Belongs to the NAD(P)-dependent epimerase/dehydratase family.

The catalysed reaction is dTDP-6-deoxy-alpha-D-allose + NAD(+) = dTDP-4-dehydro-6-deoxy-alpha-D-allose + NADH + H(+). The enzyme catalyses dTDP-6-deoxy-alpha-D-allose + NADP(+) = dTDP-4-dehydro-6-deoxy-alpha-D-allose + NADPH + H(+). In terms of biological role, catalyzes the stereospecific reduction of the C-4 keto group of dTDP-4-dehydro-6-deoxy-D-allose, leading to dTDP-6-deoxy-D-allose, an intermediate in the biosynthesis of the mycinose moiety of the chalcomycin antibiotic. This chain is dTDP-4-dehydro-6-deoxy-D-allose reductase (chmD), found in Streptomyces bikiniensis.